The chain runs to 779 residues: Glutathione biosynthesis bifunctional protein GshAB (779 aa).

The interval 1–346 is glutamate--cysteine ligase; the sequence is MAFSKNILDS…ETANRNQEQA (346 aa). Residues 512 to 768 enclose the ATP-grasp domain; sequence KKILDQAGIN…LDDKILDALG (257 aa). 539–597 lines the ATP pocket; that stretch reads PYYRGRAIVIKPKSTNFGIGITIIKENNRHDFFAQGIAQAFKHEATVLIENFSSGKEYR. Residues aspartate 719, glutamate 738, and asparagine 740 each contribute to the Mg(2+) site. 3 residues coordinate Mn(2+): aspartate 719, glutamate 738, and asparagine 740.

In the N-terminal section; belongs to the glutamate--cysteine ligase type 1 family. Type 2 subfamily. In terms of assembly, monomer. It depends on Mg(2+) as a cofactor. Mn(2+) serves as cofactor.

It catalyses the reaction L-cysteine + L-glutamate + ATP = gamma-L-glutamyl-L-cysteine + ADP + phosphate + H(+). It carries out the reaction gamma-L-glutamyl-L-cysteine + glycine + ATP = glutathione + ADP + phosphate + H(+). It functions in the pathway sulfur metabolism; glutathione biosynthesis; glutathione from L-cysteine and L-glutamate: step 1/2. It participates in sulfur metabolism; glutathione biosynthesis; glutathione from L-cysteine and L-glutamate: step 2/2. Its function is as follows. Synthesizes glutathione from L-glutamate and L-cysteine via gamma-L-glutamyl-L-cysteine. The sequence is that of Glutathione biosynthesis bifunctional protein GshAB from Desulfotalea psychrophila (strain LSv54 / DSM 12343).